The following is a 259-amino-acid chain: Acyl-[acyl-carrier-protein]--UDP-N-acetylglucosamine O-acyltransferase (259 aa).

Belongs to the transferase hexapeptide repeat family. LpxA subfamily. As to quaternary structure, homotrimer.

It localises to the cytoplasm. It carries out the reaction a (3R)-hydroxyacyl-[ACP] + UDP-N-acetyl-alpha-D-glucosamine = a UDP-3-O-[(3R)-3-hydroxyacyl]-N-acetyl-alpha-D-glucosamine + holo-[ACP]. Its pathway is glycolipid biosynthesis; lipid IV(A) biosynthesis; lipid IV(A) from (3R)-3-hydroxytetradecanoyl-[acyl-carrier-protein] and UDP-N-acetyl-alpha-D-glucosamine: step 1/6. Functionally, involved in the biosynthesis of lipid A, a phosphorylated glycolipid that anchors the lipopolysaccharide to the outer membrane of the cell. The sequence is that of Acyl-[acyl-carrier-protein]--UDP-N-acetylglucosamine O-acyltransferase from Akkermansia muciniphila (strain ATCC BAA-835 / DSM 22959 / JCM 33894 / BCRC 81048 / CCUG 64013 / CIP 107961 / Muc).